The chain runs to 139 residues: Putative pre-16S rRNA nuclease (139 aa).

It belongs to the YqgF nuclease family.

Its subcellular location is the cytoplasm. Functionally, could be a nuclease involved in processing of the 5'-end of pre-16S rRNA. The chain is Putative pre-16S rRNA nuclease from Streptococcus equi subsp. zooepidemicus (strain H70).